Reading from the N-terminus, the 360-residue chain is Phospho-N-acetylmuramoyl-pentapeptide-transferase (360 aa).

10 consecutive transmembrane segments (helical) span residues Y21–G41, M74–A94, Y97–Y117, I135–V155, I168–S188, G199–S219, A236–F256, V263–L283, I288–V308, and V338–K358.

The protein belongs to the glycosyltransferase 4 family. MraY subfamily. Mg(2+) serves as cofactor.

The protein localises to the cell inner membrane. The catalysed reaction is UDP-N-acetyl-alpha-D-muramoyl-L-alanyl-gamma-D-glutamyl-meso-2,6-diaminopimeloyl-D-alanyl-D-alanine + di-trans,octa-cis-undecaprenyl phosphate = di-trans,octa-cis-undecaprenyl diphospho-N-acetyl-alpha-D-muramoyl-L-alanyl-D-glutamyl-meso-2,6-diaminopimeloyl-D-alanyl-D-alanine + UMP. It participates in cell wall biogenesis; peptidoglycan biosynthesis. Catalyzes the initial step of the lipid cycle reactions in the biosynthesis of the cell wall peptidoglycan: transfers peptidoglycan precursor phospho-MurNAc-pentapeptide from UDP-MurNAc-pentapeptide onto the lipid carrier undecaprenyl phosphate, yielding undecaprenyl-pyrophosphoryl-MurNAc-pentapeptide, known as lipid I. The polypeptide is Phospho-N-acetylmuramoyl-pentapeptide-transferase (Shewanella sediminis (strain HAW-EB3)).